The sequence spans 417 residues: Echinulin prenyltransferase 1 (417 aa).

Residues Arg90, Lys179, Tyr181, Lys248, Tyr250, Tyr333, Tyr398, and Tyr402 each contribute to the dimethylallyl diphosphate site.

This sequence belongs to the tryptophan dimethylallyltransferase family.

The enzyme catalyses cyclo(L-tryptophyl-L-alanyl) + dimethylallyl diphosphate = preechinulin + diphosphate. It functions in the pathway secondary metabolite biosynthesis. It participates in alkaloid biosynthesis. Prenyltransferase; part of the gene cluster that mediates the biosynthesis of echinulin family alkaloid. The pathway begins with the biosynthesis of the cyclic dipeptide cyclo-L-Trp-L-Ala (cyclo-TA) by the NRPS echPS via condensation of L-alanine and L-tryptophan. The prenyltransferase echPT1 then catalyzes the first prenylation step, a reverse prenylation reaction at C2, to yield preechinulin. Preechinulin is the substrate of the cytochrome P450 monooxygenase echP450 that catalyzes the formation of the double bond between C10 and C11 to produce neoechulin A. The unique prenyltransferase echPT2 functions as a competitive enzyme with echP450 for preechinulin metabolization and uses preechinulin for effective regiospecific prenylations. Preechinulin is prenylated by echPT2 at C5 or C7. C7-prenylation leads to accumulation of tardioxopiperazine B without further modification by echPT2. In contrast, the C5-prenylated tardioxopiperazine A can be prenylated again by echPT2, predominantly at C7 to form echinulin or less frequently at C4 to give variecolorin L. EchPT2 also accepts neoechilunin A to produce varlecolorin G (prenylation at C5) or isoechinulin A (prenylation at C7). EchPT2 further converts isoechinulin A into dehydroechinulin. Moreover, a yet unidentified enzyme can also convert neoechilunin A into neoechilunin B by introducing a double bond between positions C14 and C17 and thus provides a further substrate to echPT2 for C5 and C7 prenylation. The protein is Echinulin prenyltransferase 1 of Aspergillus ruber (Eurotium rubrum).